The primary structure comprises 241 residues: Tetraspanin-1 (241 aa).

Topologically, residues 1 to 11 (MGCFNFIKVMM) are cytoplasmic. Residues 12–32 (ILFNMLIFLCGAALLAVGIWV) form a helical membrane-spanning segment. Over 33-52 (SVDGPSFVKIFGPMSSSAMQ) the chain is Extracellular. A helical transmembrane segment spans residues 53 to 73 (FVNVGYFLIAAGAVLFALGFL). The Cytoplasmic portion of the chain corresponds to 74 to 88 (GCYGAQTESKCALMT). The helical transmembrane segment at 89 to 109 (FFFILLLIFIAEVAAAVVALV) threads the bilayer. At 110–211 (YTTLAENFLT…KQLLYDIRTN (102 aa)) the chain is on the extracellular side. N-linked (GlcNAc...) asparagine glycosylation is found at Asn-141, Asn-154, Asn-167, Asn-180, Asn-189, and Asn-194. Residues 212–232 (AVTVGGVAAGIGGLELAAMIV) form a helical membrane-spanning segment. Residues 233-241 (SMYLYCNLE) lie on the Cytoplasmic side of the membrane.

It belongs to the tetraspanin (TM4SF) family. As to quaternary structure, interacts with SLC19A2. Interacts with NTRK1/TRKA.

The protein localises to the lysosome membrane. Its function is as follows. Structural component of specialized membrane microdomains known as tetraspanin-enriched microdomains (TERMs), which act as platforms for receptor clustering and signaling. Participates thereby in diverse biological functions such as cell signal transduction, adhesion, migration and protein trafficking. Regulates neuronal differentiation in response to NGF by facilitating NGF-mediated activation of NTRK1/TRKA receptor tyrosine kinase and subsequent downstream signaling pathways. Plays a role in the inhibition of TNFalpha-induced apoptosis. Mechanistically, inhibits the NF-kappa-B signaling pathway by blocking phosphorylation of CHUK. Also promotes the stability of the thiamine transporter 1/SLC19A2 in intestinal epithelial cells leading to an increase of thiamine uptake process. This is Tetraspanin-1 (TSPAN1) from Bos taurus (Bovine).